We begin with the raw amino-acid sequence, 117 residues long: ORF2 protein (117 aa).

The disordered stretch occupies residues 43–104; it reads NLGRPPAPQP…AGDGGDGELA (62 aa). Over residues 79–98 the composition is skewed to gly residues; that stretch reads GTGGDAAGGEAGGSRGAGDG.

The sequence is that of ORF2 protein from Homo sapiens (Human).